The following is a 404-amino-acid chain: Cysteine desulfurase IscS (404 aa).

Residues 75-76, Asn-155, Gln-183, and 203-205 contribute to the pyridoxal 5'-phosphate site; these read AT and SAH. N6-(pyridoxal phosphate)lysine is present on Lys-206. Thr-243 lines the pyridoxal 5'-phosphate pocket. Cys-328 (cysteine persulfide intermediate) is an active-site residue. Cys-328 lines the [2Fe-2S] cluster pocket.

The protein belongs to the class-V pyridoxal-phosphate-dependent aminotransferase family. NifS/IscS subfamily. In terms of assembly, homodimer. Forms a heterotetramer with IscU, interacts with other sulfur acceptors. Requires pyridoxal 5'-phosphate as cofactor.

It is found in the cytoplasm. It catalyses the reaction (sulfur carrier)-H + L-cysteine = (sulfur carrier)-SH + L-alanine. Its pathway is cofactor biosynthesis; iron-sulfur cluster biosynthesis. Functionally, master enzyme that delivers sulfur to a number of partners involved in Fe-S cluster assembly, tRNA modification or cofactor biosynthesis. Catalyzes the removal of elemental sulfur atoms from cysteine to produce alanine. Functions as a sulfur delivery protein for Fe-S cluster synthesis onto IscU, an Fe-S scaffold assembly protein, as well as other S acceptor proteins. The protein is Cysteine desulfurase IscS of Vibrio cholerae serotype O1 (strain M66-2).